A 108-amino-acid polypeptide reads, in one-letter code: Probable endonuclease 4 (108 aa).

Residues His2, His36, Asp49, His51, and Glu81 each coordinate Zn(2+).

It belongs to the AP endonuclease 2 family. Zn(2+) serves as cofactor.

The enzyme catalyses Endonucleolytic cleavage to 5'-phosphooligonucleotide end-products.. Its function is as follows. Endonuclease IV plays a role in DNA repair. It cleaves phosphodiester bonds at apurinic or apyrimidinic (AP) sites, generating a 3'-hydroxyl group and a 5'-terminal sugar phosphate. The polypeptide is Probable endonuclease 4 (nfo) (Thermotoga neapolitana).